The chain runs to 395 residues: Ribonuclease D (395 aa).

Positions 14-181 (LITKSEDLAA…VYETLRDRLE (168 aa)) constitute a 3'-5' exonuclease domain. Residues 219 to 300 (NRRYLGLLRA…AEARGLPDAD (82 aa)) form the HRDC domain.

Belongs to the RNase D family. Requires a divalent metal cation as cofactor.

The protein localises to the cytoplasm. The catalysed reaction is Exonucleolytic cleavage that removes extra residues from the 3'-terminus of tRNA to produce 5'-mononucleotides.. Functionally, exonuclease involved in the 3' processing of various precursor tRNAs. Initiates hydrolysis at the 3'-terminus of an RNA molecule and releases 5'-mononucleotides. The polypeptide is Ribonuclease D (Granulibacter bethesdensis (strain ATCC BAA-1260 / CGDNIH1)).